Here is a 325-residue protein sequence, read N- to C-terminus: NADH-quinone oxidoreductase subunit H (325 aa).

The next 8 membrane-spanning stretches (helical) occupy residues 11 to 31 (ILLTILKAVVILLVVVTCGAF), 81 to 101 (VIFTLAPMIAFTSLLLAFAIV), 114 to 134 (IGILFFLMMAGLAVYAVLFAG), 154 to 174 (LSYEVFLGLSLMGVVAQAGSF), 186 to 206 (VWNVIPQFFGFITFAIAGVAV), 237 to 257 (FFVGEYIGIVTISALMVTLFF), 265 to 285 (LPPFIWFALKTAFFMMMFILI), and 304 to 324 (ICLPLTLINLLVTAAVILWQA).

This sequence belongs to the complex I subunit 1 family. As to quaternary structure, NDH-1 is composed of 13 different subunits. Subunits NuoA, H, J, K, L, M, N constitute the membrane sector of the complex.

It localises to the cell inner membrane. The catalysed reaction is a quinone + NADH + 5 H(+)(in) = a quinol + NAD(+) + 4 H(+)(out). In terms of biological role, NDH-1 shuttles electrons from NADH, via FMN and iron-sulfur (Fe-S) centers, to quinones in the respiratory chain. The immediate electron acceptor for the enzyme in this species is believed to be ubiquinone. Couples the redox reaction to proton translocation (for every two electrons transferred, four hydrogen ions are translocated across the cytoplasmic membrane), and thus conserves the redox energy in a proton gradient. This subunit may bind ubiquinone. This Shigella flexneri serotype 5b (strain 8401) protein is NADH-quinone oxidoreductase subunit H.